A 732-amino-acid chain; its full sequence is Translation initiation factor IF-2 (732 aa).

The interval 40–147 (PEVVEKLDHT…QQEQPMKKEK (108 aa)) is disordered. Over residues 42 to 67 (VVEKLDHTYNKKNERPQASAPKEKQK) the composition is skewed to basic and acidic residues. Residues 90–103 (KVPKKKSANKKKEG) show a composition bias toward basic residues. The span at 104–117 (KKHDLQLQQQEKKI) shows a compositional bias: basic and acidic residues. Residues 118–129 (FHQQKKKIKGKA) are compositionally biased toward basic residues. The 170-residue stretch at 233–402 (ERPPVVTIMG…LLVSEMEELK (170 aa)) folds into the tr-type G domain. A G1 region spans residues 242-249 (GHVDHGKT). Residue 242–249 (GHVDHGKT) participates in GTP binding. The segment at 267–271 (GITQH) is G2. The tract at residues 288–291 (DTPG) is G3. GTP-binding positions include 288 to 292 (DTPGH) and 342 to 345 (NKMD). The interval 342–345 (NKMD) is G4. The segment at 378–380 (SAK) is G5.

Belongs to the TRAFAC class translation factor GTPase superfamily. Classic translation factor GTPase family. IF-2 subfamily.

Its subcellular location is the cytoplasm. Functionally, one of the essential components for the initiation of protein synthesis. Protects formylmethionyl-tRNA from spontaneous hydrolysis and promotes its binding to the 30S ribosomal subunits. Also involved in the hydrolysis of GTP during the formation of the 70S ribosomal complex. The sequence is that of Translation initiation factor IF-2 from Geobacillus sp. (strain WCH70).